Consider the following 356-residue polypeptide: D-xylulose reductase (356 aa).

Positions 44, 69, and 155 each coordinate Zn(2+). 179 to 184 (GAGPIG) provides a ligand contact to NAD(+).

Belongs to the zinc-containing alcohol dehydrogenase family. It depends on Zn(2+) as a cofactor.

It catalyses the reaction xylitol + NAD(+) = D-xylulose + NADH + H(+). The protein operates within carbohydrate degradation; L-arabinose degradation via L-arabinitol; D-xylulose 5-phosphate from L-arabinose (fungal route): step 4/5. This Saccharomyces cerevisiae (strain ATCC 204508 / S288c) (Baker's yeast) protein is D-xylulose reductase (XYL2).